A 733-amino-acid polypeptide reads, in one-letter code: Nuclear hormone receptor family member nhr-66 (733 aa).

2 stretches are compositionally biased toward low complexity: residues 113–130 (PAIP…SQAS) and 165–185 (QQNR…QQQN). The disordered stretch occupies residues 113-190 (PAIPSSSSCS…AQQQNSMARK (78 aa)). Positions 266-343 (VPACAICGTD…SGMDKNSVQH (78 aa)) form a DNA-binding region, nuclear receptor. 2 consecutive NR C4-type zinc fingers follow at residues 269–289 (CAIC…CAAC) and 305–326 (CNKG…CRAC). The interval 361 to 396 (PDAEFEPSAKVSTVSEPSTSSGPSGGFNQNVSSPAG) is disordered. Residues 371–382 (VSTVSEPSTSSG) show a composition bias toward low complexity. The region spanning 444-687 (CLGDWFRKPS…ACFNQMLDVE (244 aa)) is the NR LBD domain. The AF-2 stretch occupies residues 676–687 (ADACFNQMLDVE). Residues 691–733 (VSPDGQKDSEAEQGPSPVSVPEAARGSYQDDDMPPVLEKNCDL) are disordered.

The protein belongs to the nuclear hormone receptor family. As to quaternary structure, interacts with nuclear hormone receptor nhr-49; the interaction is direct. In terms of tissue distribution, widely expressed, including in hypodermis, gut, muscle, and neuronal cells of the ventral nerve cord, head, and tail ganglia. Expressed in the head ganglion in several sensory and interneurons, including AVA.

It is found in the nucleus. Functionally, transcription factor. Binds to regulatory elements and regulates transcription of target genes, including the potassium channel accessory subunit mps-2. Negatively regulates transcription of mps-2, thereby modulating age-dependent memory decline. In concert with nuclear hormone receptor nhr-49, involved in regulating target genes with roles in sphingolipid breakdown and lipid remodeling. Plays a role in modulating mitochondrial morphology and function. The polypeptide is Nuclear hormone receptor family member nhr-66 (Caenorhabditis elegans).